The sequence spans 444 residues: Argininosuccinate synthase (444 aa).

Residues 18–26 and A44 contribute to the ATP site; that span reads AFSGGLDTS. Y100 serves as a coordination point for L-citrulline. 2 residues coordinate ATP: G130 and T132. T132, N136, and D137 together coordinate L-aspartate. N136 serves as a coordination point for L-citrulline. D137 lines the ATP pocket. Residues R140 and S193 each coordinate L-citrulline. D195 serves as a coordination point for ATP. Residues T202, E204, and E281 each coordinate L-citrulline.

The protein belongs to the argininosuccinate synthase family. Type 2 subfamily. Homotetramer.

It is found in the cytoplasm. The catalysed reaction is L-citrulline + L-aspartate + ATP = 2-(N(omega)-L-arginino)succinate + AMP + diphosphate + H(+). The protein operates within amino-acid biosynthesis; L-arginine biosynthesis; L-arginine from L-ornithine and carbamoyl phosphate: step 2/3. This is Argininosuccinate synthase from Haemophilus influenzae (strain PittGG).